The sequence spans 155 residues: MVCTPAENFNNSLTIASKPKNEAGLAPLLLTVLELVRQLMEAQVIRRMEEDLLSEPDLERAADSLQKLEEQILHLCEMFEVDPADLNINLGEIGTLLPSSGSYYPGQPSSRPSVLELLDRLLNTGIVVDGEIDLGIAQIDLIHAKLRLVLTSKPI.

Belongs to the gas vesicle GvpK family.

It localises to the gas vesicle. Functionally, might be involved in nucleating gas vesicle formation. Gas vesicles (GV) are hollow, gas filled proteinaceous nanostructures. During planktonic growth they allow positioning of the organism at a favorable depth for light or nutrient acquisition. The sequence is that of Gas vesicle protein K from Dolichospermum flosaquae (Anabaena flos-aquae).